Consider the following 374-residue polypeptide: Dual-specificity RNA methyltransferase RlmN (374 aa).

The Proton acceptor role is filled by Glu94. The Radical SAM core domain maps to Glu100–Asp339. A disulfide bridge links Cys107 with Cys344. [4Fe-4S] cluster contacts are provided by Cys114, Cys118, and Cys121. Residues Gly168 to Glu169, Ser200, Ser222 to His224, and Asn301 each bind S-adenosyl-L-methionine. Cys344 functions as the S-methylcysteine intermediate in the catalytic mechanism.

The protein belongs to the radical SAM superfamily. RlmN family. [4Fe-4S] cluster serves as cofactor.

The protein localises to the cytoplasm. The enzyme catalyses adenosine(2503) in 23S rRNA + 2 reduced [2Fe-2S]-[ferredoxin] + 2 S-adenosyl-L-methionine = 2-methyladenosine(2503) in 23S rRNA + 5'-deoxyadenosine + L-methionine + 2 oxidized [2Fe-2S]-[ferredoxin] + S-adenosyl-L-homocysteine. It carries out the reaction adenosine(37) in tRNA + 2 reduced [2Fe-2S]-[ferredoxin] + 2 S-adenosyl-L-methionine = 2-methyladenosine(37) in tRNA + 5'-deoxyadenosine + L-methionine + 2 oxidized [2Fe-2S]-[ferredoxin] + S-adenosyl-L-homocysteine. Specifically methylates position 2 of adenine 2503 in 23S rRNA and position 2 of adenine 37 in tRNAs. m2A2503 modification seems to play a crucial role in the proofreading step occurring at the peptidyl transferase center and thus would serve to optimize ribosomal fidelity. The protein is Dual-specificity RNA methyltransferase RlmN of Vibrio vulnificus (strain CMCP6).